A 498-amino-acid polypeptide reads, in one-letter code: ATP synthase subunit beta, chloroplastic (498 aa).

Position 172–179 (172–179 (GGAGVGKT)) interacts with ATP.

Belongs to the ATPase alpha/beta chains family. In terms of assembly, F-type ATPases have 2 components, CF(1) - the catalytic core - and CF(0) - the membrane proton channel. CF(1) has five subunits: alpha(3), beta(3), gamma(1), delta(1), epsilon(1). CF(0) has four main subunits: a(1), b(1), b'(1) and c(9-12).

It localises to the plastid. Its subcellular location is the chloroplast thylakoid membrane. The catalysed reaction is ATP + H2O + 4 H(+)(in) = ADP + phosphate + 5 H(+)(out). Its function is as follows. Produces ATP from ADP in the presence of a proton gradient across the membrane. The catalytic sites are hosted primarily by the beta subunits. This Oryza nivara (Indian wild rice) protein is ATP synthase subunit beta, chloroplastic.